A 236-amino-acid polypeptide reads, in one-letter code: Leucyl/phenylalanyl-tRNA--protein transferase (236 aa).

Over residues 1-13 the composition is skewed to polar residues; that stretch reads MNSLSYLNQDQQS. A disordered region spans residues 1-22; that stretch reads MNSLSYLNQDQQSFPPPEQALS.

It belongs to the L/F-transferase family.

The protein resides in the cytoplasm. The enzyme catalyses N-terminal L-lysyl-[protein] + L-leucyl-tRNA(Leu) = N-terminal L-leucyl-L-lysyl-[protein] + tRNA(Leu) + H(+). It carries out the reaction N-terminal L-arginyl-[protein] + L-leucyl-tRNA(Leu) = N-terminal L-leucyl-L-arginyl-[protein] + tRNA(Leu) + H(+). It catalyses the reaction L-phenylalanyl-tRNA(Phe) + an N-terminal L-alpha-aminoacyl-[protein] = an N-terminal L-phenylalanyl-L-alpha-aminoacyl-[protein] + tRNA(Phe). Its function is as follows. Functions in the N-end rule pathway of protein degradation where it conjugates Leu, Phe and, less efficiently, Met from aminoacyl-tRNAs to the N-termini of proteins containing an N-terminal arginine or lysine. The protein is Leucyl/phenylalanyl-tRNA--protein transferase of Shewanella piezotolerans (strain WP3 / JCM 13877).